We begin with the raw amino-acid sequence, 226 residues long: MIVIEQILSKQDVGAYRQQLAECPWGDGRKTAMGMAASVKNNNQADAQHANVRQLANQLLARIGETPKIVSAALPHKIFPPCFNRYNETEEYGYHVDAAIMRIPNTSEVIRSDVSMTVFLSEPEEYDGGELVIATEFGQQQIKLPAGYAVVYPSSSLHKVTAVTRGQRIAAITWMQSMVADVTLRQTLYQLDQSIQNLIKANNTDRAELDNLHNVYHNLIRQFTQL.

The Fe2OG dioxygenase domain occupies 77–177 (KIFPPCFNRY…RIAAITWMQS (101 aa)). The Fe cation site is built by histidine 95, aspartate 97, and histidine 158. Arginine 168 contributes to the 2-oxoglutarate binding site.

Fe(2+) is required as a cofactor. The cofactor is L-ascorbate.

This is PKHD-type hydroxylase Sfri_0612 from Shewanella frigidimarina (strain NCIMB 400).